Here is a 704-residue protein sequence, read N- to C-terminus: RCC1 domain-containing protein DDB_G0295713 (704 aa).

2 RCC1 repeats span residues methionine 1–glutamate 48 and lysine 69–glutamine 120. The interval tyrosine 221 to asparagine 246 is disordered. Residues asparagine 222–asparagine 246 are compositionally biased toward low complexity. The RCC1 3 repeat unit spans residues glutamine 298–asparagine 348. A compositionally biased stretch (basic and acidic residues) spans isoleucine 412–histidine 431. The interval isoleucine 412 to asparagine 458 is disordered. A compositionally biased stretch (acidic residues) spans aspartate 432–aspartate 451. Positions isoleucine 668 to lysine 698 form a coiled coil.

The sequence is that of RCC1 domain-containing protein DDB_G0295713 from Dictyostelium discoideum (Social amoeba).